Here is a 282-residue protein sequence, read N- to C-terminus: Phosphatidylserine decarboxylase proenzyme (282 aa).

Catalysis depends on charge relay system; for autoendoproteolytic cleavage activity residues D88, H144, and S247. S247 (schiff-base intermediate with substrate; via pyruvic acid; for decarboxylase activity) is an active-site residue. Residue S247 is modified to Pyruvic acid (Ser); by autocatalysis.

It belongs to the phosphatidylserine decarboxylase family. PSD-B subfamily. Prokaryotic type I sub-subfamily. In terms of assembly, heterodimer of a large membrane-associated beta subunit and a small pyruvoyl-containing alpha subunit. Requires pyruvate as cofactor. Is synthesized initially as an inactive proenzyme. Formation of the active enzyme involves a self-maturation process in which the active site pyruvoyl group is generated from an internal serine residue via an autocatalytic post-translational modification. Two non-identical subunits are generated from the proenzyme in this reaction, and the pyruvate is formed at the N-terminus of the alpha chain, which is derived from the carboxyl end of the proenzyme. The autoendoproteolytic cleavage occurs by a canonical serine protease mechanism, in which the side chain hydroxyl group of the serine supplies its oxygen atom to form the C-terminus of the beta chain, while the remainder of the serine residue undergoes an oxidative deamination to produce ammonia and the pyruvoyl prosthetic group on the alpha chain. During this reaction, the Ser that is part of the protease active site of the proenzyme becomes the pyruvoyl prosthetic group, which constitutes an essential element of the active site of the mature decarboxylase.

The protein resides in the cell membrane. The enzyme catalyses a 1,2-diacyl-sn-glycero-3-phospho-L-serine + H(+) = a 1,2-diacyl-sn-glycero-3-phosphoethanolamine + CO2. It participates in phospholipid metabolism; phosphatidylethanolamine biosynthesis; phosphatidylethanolamine from CDP-diacylglycerol: step 2/2. Catalyzes the formation of phosphatidylethanolamine (PtdEtn) from phosphatidylserine (PtdSer). The sequence is that of Phosphatidylserine decarboxylase proenzyme from Xanthomonas oryzae pv. oryzae (strain MAFF 311018).